A 1243-amino-acid polypeptide reads, in one-letter code: Serine/threonine-protein kinase/endoribonuclease IRE1 (1243 aa).

The first 35 residues, 1–35 (MMRRPPSQGRWSASHQKLLLAFAFILIPWLQLADA), serve as a signal peptide directing secretion. At 36 to 585 (QQQPQQPQIR…VKALPQSAAN (550 aa)) the chain is on the lumenal side. Disordered stretches follow at residues 70–132 (HAAP…KPNY) and 149–172 (QPVR…GLAS). Basic and acidic residues predominate over residues 73 to 85 (PDVHPEAKFDTVN). The segment covering 90–99 (QQSTASPQQH) has biased composition (polar residues). Residues 163-172 (SSSAASGLAS) are compositionally biased toward low complexity. N-linked (GlcNAc...) asparagine glycans are attached at residues N226, N470, and N554. Residues 586-606 (SVIDFVSNPILIIFLIGSLIY) form a helical membrane-spanning segment. Residues 607–1243 (NEKKLRRSYH…FREYYEPAGL (637 aa)) are Cytoplasmic-facing. Positions 638–765 (GDESGDDKDG…QSHENDPALT (128 aa)) are disordered. A compositionally biased stretch (low complexity) spans 650 to 660 (PSSPSPRSQPQ). Positions 674-693 (ERNAGDQDKVKDNRSLHDVS) are enriched in basic and acidic residues. Residues 732–749 (KKKKAHRGRRGGVKHRKG) are compositionally biased toward basic residues. A Protein kinase domain is found at 809–1105 (VDTDVELGMG…SREVMAHPFF (297 aa)). ATP contacts are provided by residues 815 to 823 (LGMGSNGTV) and K837. ADP-binding residues include S819, K837, E881, and C883. D931 (proton acceptor) is an active-site residue. Residues N936 and D953 each contribute to the Mg(2+) site. Positions 1108-1240 (PKKRLAFLCD…TDRFREYYEP (133 aa)) constitute a KEN domain.

This sequence belongs to the protein kinase superfamily. Ser/Thr protein kinase family. Mg(2+) serves as cofactor. Autophosphorylated mainly on serine residues; phosphorylation enables nucleotide binding by the active site.

It localises to the endoplasmic reticulum membrane. It carries out the reaction L-seryl-[protein] + ATP = O-phospho-L-seryl-[protein] + ADP + H(+). It catalyses the reaction L-threonyl-[protein] + ATP = O-phospho-L-threonyl-[protein] + ADP + H(+). In terms of biological role, senses unfolded proteins in the lumen of the endoplasmic reticulum via its N-terminal domain which leads to enzyme auto-activation. The active endoribonuclease domain splices precursor mRNAs to produce their mature form which then induces transcription of UPR target genes. The chain is Serine/threonine-protein kinase/endoribonuclease IRE1 from Hypocrea jecorina (strain QM6a) (Trichoderma reesei).